A 186-amino-acid chain; its full sequence is Low amplitude and bright protein LabA (186 aa).

Its function is as follows. Functions in an output pathway of the circadian clock. One of three clock output pathways. Involved in negative feedback regulation of KaiC; deletion leads to overexpression of KaiC protein and decreases the amplitude of the circadian response. Overexpression reduces the expression of circadian genes. The chain is Low amplitude and bright protein LabA from Synechococcus elongatus (strain ATCC 33912 / PCC 7942 / FACHB-805) (Anacystis nidulans R2).